The chain runs to 801 residues: Vacuolar transporter chaperone complex subunit 4 (801 aa).

Over 1-692 (MPFSKAWRSA…MLKWTEHATR (692 aa)) the chain is Cytoplasmic. ATP-binding residues include Lys-215, Arg-286, Arg-288, Lys-312, Lys-325, and Arg-391. A Mn(2+)-binding site is contributed by Glu-441. Lys-473 is an active-site residue. The helical transmembrane segment at 693–713 (LGLVGLGVIQFGNSMTLPGDV) threads the bilayer. Over 714–723 (TQLSSFWRAN) the chain is Vacuolar. Residues 724-744 (FHIVLGIALVLVALMTLMYAL) form a helical membrane-spanning segment. Residues 745–768 (MTFKARSRRVYARKKIRFDDSWGP) lie on the Cytoplasmic side of the membrane. A helical transmembrane segment spans residues 769–789 (TVLTVFLAFGICVIAMMHILG). Residues 790-801 (RYGPMLTGDDNF) are Vacuolar-facing.

Belongs to the VTC4 family. In terms of assembly, the VTC core complex is an integral membrane heterooligomer composed of at least the catalytic subunit vtc4 and the accessory subunits vtc1 and vtc2. vtc1 is a small membrane protein without hydrophilic domain. Vtc2 and vtc4 are related and have 2 hydrophilic domains that face the cytosol, an N-terminal SPX domain and the central core domain. The central core in vtc4 is the catalytic domain. Mn(2+) is required as a cofactor.

Its subcellular location is the acidocalcisome membrane. It catalyses the reaction [phosphate](n) + ATP = [phosphate](n+1) + ADP. Its activity is regulated as follows. Activity of the enzyme is Mn(2+)-dependent and enhanced in the presence of pyrophosphate (PPi). Functionally, component of a polyphosphate synthase complex that utilizes ATP to synthesize and translocate polyphosphate to acidocalcisomes in epimastigotes, insect-stages of Trypanosoma brucei. Catalytic subunit of the vacuolar transporter chaperone (VTC) complex. The VTC complex acts as a vacuolar polyphosphate polymerase that catalyzes the synthesis of inorganic polyphosphate (polyP) via transfer of phosphate from ATP to a growing polyP chain, releasing ADP. VTC exposes its catalytic domain vtc4 to the cytosol, where the growing polyP chain winds through a tunnel-shaped pocket, integrating cytoplasmic polymer synthesis with polyP membrane translocation. The VTC complex carries 9 vacuolar transmembrane domains, which are likely to constitute the translocation channel into the organelle lumen. PolyP synthesis is tightly coupled to its transport into the vacuole lumen, in order to avoid otherwise toxic intermediates in the cytosol, and it depends on the proton gradient across the membrane, formed by V-ATPase. The VTC complex also plays a role in vacuolar membrane fusion. Essential for infection and parasite survival in the mammalian host. This Trypanosoma cruzi (strain CL Brener) protein is Vacuolar transporter chaperone complex subunit 4.